The following is an 81-amino-acid chain: Beta-catenin-interacting protein 1 (81 aa).

Phosphoserine is present on S59.

It belongs to the CTNNBIP1 family. Binds CTNNB1.

The protein localises to the cytoplasm. It localises to the nucleus. In terms of biological role, prevents the interaction between CTNNB1 and TCF family members, and acts as a negative regulator of the Wnt signaling pathway. The chain is Beta-catenin-interacting protein 1 (CTNNBIP1) from Homo sapiens (Human).